A 400-amino-acid chain; its full sequence is Enoyl-[acyl-carrier-protein] reductase [NADH] (400 aa).

NAD(+) contacts are provided by residues 48–53 (GSSSGY), 74–75 (FE), 111–112 (DA), and 139–140 (LA). Tyr-225 contributes to the substrate binding site. Tyr-235 functions as the Proton donor in the catalytic mechanism. NAD(+)-binding positions include Lys-244 and 273 to 275 (VVT).

This sequence belongs to the TER reductase family. In terms of assembly, monomer.

It catalyses the reaction a 2,3-saturated acyl-[ACP] + NAD(+) = a (2E)-enoyl-[ACP] + NADH + H(+). The protein operates within lipid metabolism; fatty acid biosynthesis. Functionally, involved in the final reduction of the elongation cycle of fatty acid synthesis (FAS II). Catalyzes the reduction of a carbon-carbon double bond in an enoyl moiety that is covalently linked to an acyl carrier protein (ACP). This Aliivibrio salmonicida (strain LFI1238) (Vibrio salmonicida (strain LFI1238)) protein is Enoyl-[acyl-carrier-protein] reductase [NADH].